Consider the following 486-residue polypeptide: Zinc finger CCCH domain-containing protein 49 (486 aa).

The segment at 157-184 adopts a C3H1-type zinc-finger fold; that stretch reads RNRAHVCSFYVRGECTRGAECPYRHEMP. The 74-residue stretch at 228–301 folds into the RRM domain; sequence RTLYIGGLDS…VRLKLMWGKP (74 aa). 2 disordered regions span residues 329 to 348 and 379 to 486; these read SQQQ…QQQP and LVES…NGMT. 2 stretches are compositionally biased toward low complexity: residues 389-407 and 415-430; these read PGPQ…GQSY and YHGG…YGGY. Residues 431-444 are compositionally biased toward pro residues; the sequence is MPPPRMPYQQPPQY. Low complexity predominate over residues 445-486; that stretch reads PAYQPMLAPPAQSQASSLQQPAPATQQLGQGPQQQTTQNGMT.

The polypeptide is Zinc finger CCCH domain-containing protein 49 (Oryza sativa subsp. japonica (Rice)).